A 335-amino-acid polypeptide reads, in one-letter code: DNA-directed RNA polymerase RPB7 homolog (335 aa).

Belongs to the Asfivirus DNA-directed RNA polymerase RPB7 homolog family. Part of the viral DNA-directed RNA polymerase that consists of 8 polII-like subunits (RPB1, RPB2, RPB3, RPB5, RPB6, RPB7, RPB9, RPB10), a capping enzyme and a termination factor.

It is found in the host cytoplasm. Its subcellular location is the virion. Its function is as follows. Component of the DNA-directed RNA polymerase (RNAP) that catalyzes the transcription in the cytoplasm of viral DNA into RNA using the four ribonucleoside triphosphates as substrates. The polypeptide is DNA-directed RNA polymerase RPB7 homolog (Ornithodoros (relapsing fever ticks)).